We begin with the raw amino-acid sequence, 1122 residues long: MMVKVTKLVASRPIVVFCVLAFLVVVFECIWISNWRTTTENLVKEVASFTEDLRTSLVSEIENIGKFTYAKTNLSTIGLARVIDSYITNNDTGFTEIQTQIAPLLFVAYSTILQVSQVSYISRDGLMFSYIAESNTSVAVFANSSSNSSRGDYTWYTQTVDQLTGRLNGNSTKSQSLDVTHTDWFQAAQSNNYTTAFVGTSLGGEDNETLIQSVVSLYSKKGLVSLGFPVKTLTEVLNSLNLHGEELYMWTKDGTVLVREGSLNDSFFISNGSICFGRESNSLWSQCIPENCSSSGYEVEIKRLRYQAFCSVIEVSGVPLRYTLMFPNKGGATRIKHQAEKAKYQLIVVMIFLGFGWPVWFVWFMMQATRREMHMRATLINQMEATQQAERKSMNKSQAFANASHDIRGALAGMKGLIDICRDGVKPGSDVDTTLNQVNVCAKDLVALLNSVLDMSKIESGKMQLVEEDFNLSKLLEDVIDFYHPVAMKKGVDVVLDPHDGSVFKFSNVRGDSGRLKQILNNLVSNAVKFTVDGHIAVRAWAQRPGSNSSVVLASYPKGVSKFVKSMFCKNKEESSTYETEISNSIRNNANTMEFVFEVDDTGKGIPMEMRKSVFENYVQVRETAQGHQGTGLGLGIVQSLVRLMGGEIRITDKAMGEKGTCFQFNVLLTTLESPPVSDMKVRQEIEAGGDYVSTPNLGLTINTSLGGSMNIRNLSPRFNNCLSSSPKQEGSRVVLLLKNEERRRVTEKYIKNLGIKVTVVEKWEHLSYALERLFGFSPQSSMGRAECSLSCPSSRELPFIGMDGIDSRSQLPKRRSISFSAVVLLVIDAKTGPFFELCDIVKQFRRGLPHGISCKVVWLNESSTRVSERGDISCSRPLHGSRLMEVLKMLPEFGGTVLKEPPTELQRESLLRHSFVAERSPKHKVQEEGPSSMFNKKLGKRIMASTDSESETRVKSVRTGRKPIGNPEDEQETSKPSDDEFLRGKRVLVVDDNFISRKVATGKLKKMGVSEVEQCDSGKEALRLVTEGLTQREEQGSVDKLPFDYIFMDCQMPEMDGYEATREIRKVEKSYGVRTPIIAVSGHDPGSEEARETIQAGMDAFLDKSLNQLANVIREIESKRH.

The Cytoplasmic portion of the chain corresponds to 1–12 (MMVKVTKLVASR). Residues 13–33 (PIVVFCVLAFLVVVFECIWIS) form a helical membrane-spanning segment. At 34-345 (NWRTTTENLV…KHQAEKAKYQ (312 aa)) the chain is on the extracellular side. Residues 346 to 366 (LIVVMIFLGFGWPVWFVWFMM) form a helical membrane-spanning segment. Residues 367-1122 (QATRREMHMR…VIREIESKRH (756 aa)) lie on the Cytoplasmic side of the membrane. The Histidine kinase domain maps to 402–671 (NASHDIRGAL…CFQFNVLLTT (270 aa)). Residue histidine 405 is modified to Phosphohistidine; by autocatalysis. The segment covering 918-928 (AERSPKHKVQE) has biased composition (basic and acidic residues). The segment at 918-981 (AERSPKHKVQ…QETSKPSDDE (64 aa)) is disordered. The 134-residue stretch at 987 to 1120 (RVLVVDDNFI…ANVIREIESK (134 aa)) folds into the Response regulatory domain. A 4-aspartylphosphate modification is found at aspartate 1050.

As to quaternary structure, homodimer. Interacts with AHP2 and AHP3. As to expression, expressed in vascular tissues of inflorescence stems and floral organs, especially in procambium cells, and in siliques.

The protein localises to the cell membrane. It carries out the reaction ATP + protein L-histidine = ADP + protein N-phospho-L-histidine.. Essential protein. Functions as a histidine kinase and transmits the stress signal to a downstream MAPK cascade. This protein undergoes an ATP-dependent autophosphorylation at a conserved histidine residue in the kinase core, and a phosphoryl group is then transferred to a conserved aspartate residue in the receiver domain. Required for the development of megagametophyte in female gametophyte (embryo sac) independently of cytokinin. Contributes to vascular bundle formation and secondary growth in a cytokinin-independent manner, probably by promoting the maintenance of mitotic activity and/or identity of procambial cells. Seems to influence and promote the cytokinin signaling pathway. This Arabidopsis thaliana (Mouse-ear cress) protein is Histidine kinase CKI1 (CKI1).